Consider the following 198-residue polypeptide: Charged multivesicular body protein 1a (198 aa).

Coiled coils occupy residues 7 to 41 (QLKF…QQKN) and 176 to 198 (GETS…ALRN). The tract at residues 171–198 (GASALGETSARAQEKEDQLSRRLAALRN) is disordered. The MIT-interacting motif motif lies at 187 to 197 (DQLSRRLAALR).

It belongs to the SNF7 family. As to quaternary structure, probable peripherally associated component of the endosomal sorting required for transport complex III (ESCRT-III).

The protein localises to the cytoplasm. It is found in the endosome membrane. In terms of biological role, probable peripherally associated component of the endosomal sorting required for transport complex III (ESCRT-III) which is involved in multivesicular bodies (MVBs) formation and sorting of endosomal cargo proteins into MVBs. MVBs contain intraluminal vesicles (ILVs) that are generated by invagination and scission from the limiting membrane of the endosome and mostly are delivered to lysosomes enabling degradation of membrane proteins, such as stimulated growth factor receptors, lysosomal enzymes and lipids. This is Charged multivesicular body protein 1a (chmp1a) from Danio rerio (Zebrafish).